We begin with the raw amino-acid sequence, 318 residues long: uncharacterized protein (318 aa).

Residues Leu-67–Glu-157 are a coiled coil. Positions Glu-172 to Leu-318 are disordered. Basic and acidic residues-rich tracts occupy residues Asn-175 to Lys-193 and Lys-219 to Ser-236. Over residues Val-237–Thr-248 the composition is skewed to polar residues. Basic and acidic residues-rich tracts occupy residues Ser-249 to Ala-274 and Ser-300 to Gly-310.

This is an uncharacterized protein from Staphylococcus aureus (strain MW2).